We begin with the raw amino-acid sequence, 561 residues long: Liver carboxylesterase B-1 (561 aa).

The signal sequence occupies residues 1–18 (MCLRSLFLVSLATCVVCG). N-linked (GlcNAc...) asparagine glycosylation occurs at Asn-79. Residues Cys-87 and Cys-116 are joined by a disulfide bond. The Acyl-ester intermediate role is filled by Ser-221. Cys-273 and Cys-284 are joined by a disulfide. Active-site charge relay system residues include Glu-353 and His-466. Residues 558 to 561 (HNEL) carry the Prevents secretion from ER motif.

The protein belongs to the type-B carboxylesterase/lipase family. As to quaternary structure, monomer.

It is found in the endoplasmic reticulum lumen. The enzyme catalyses a carboxylic ester + H2O = an alcohol + a carboxylate + H(+). Involved in the detoxification of xenobiotics and in the activation of ester and amide prodrugs. The protein is Liver carboxylesterase B-1 of Rattus norvegicus (Rat).